We begin with the raw amino-acid sequence, 259 residues long: Phosphatidylglycerol--prolipoprotein diacylglyceryl transferase (259 aa).

4 consecutive transmembrane segments (helical) span residues 12 to 32 (LAIH…VYLA), 41 to 61 (ISSD…IVGA), 80 to 100 (IIAI…GALV), and 109 to 129 (VLNP…AQAI). Arg131 is an a 1,2-diacyl-sn-glycero-3-phospho-(1'-sn-glycerol) binding site. Helical transmembrane passes span 167–187 (IPTF…IMMW), 194–214 (LLDG…RLVI), and 226–246 (GIRI…IFVI).

The protein belongs to the Lgt family.

The protein resides in the cell membrane. It carries out the reaction L-cysteinyl-[prolipoprotein] + a 1,2-diacyl-sn-glycero-3-phospho-(1'-sn-glycerol) = an S-1,2-diacyl-sn-glyceryl-L-cysteinyl-[prolipoprotein] + sn-glycerol 1-phosphate + H(+). It functions in the pathway protein modification; lipoprotein biosynthesis (diacylglyceryl transfer). Catalyzes the transfer of the diacylglyceryl group from phosphatidylglycerol to the sulfhydryl group of the N-terminal cysteine of a prolipoprotein, the first step in the formation of mature lipoproteins. The protein is Phosphatidylglycerol--prolipoprotein diacylglyceryl transferase of Streptococcus pyogenes serotype M3 (strain ATCC BAA-595 / MGAS315).